Here is a 310-residue protein sequence, read N- to C-terminus: tRNA-cytidine(32) 2-sulfurtransferase (310 aa).

The short motif at 45-50 (SGGKDS) is the PP-loop motif element. [4Fe-4S] cluster is bound by residues Cys120, Cys123, and Cys211.

Belongs to the TtcA family. In terms of assembly, homodimer. Requires Mg(2+) as cofactor. [4Fe-4S] cluster serves as cofactor.

It is found in the cytoplasm. It carries out the reaction cytidine(32) in tRNA + S-sulfanyl-L-cysteinyl-[cysteine desulfurase] + AH2 + ATP = 2-thiocytidine(32) in tRNA + L-cysteinyl-[cysteine desulfurase] + A + AMP + diphosphate + H(+). Its pathway is tRNA modification. Its function is as follows. Catalyzes the ATP-dependent 2-thiolation of cytidine in position 32 of tRNA, to form 2-thiocytidine (s(2)C32). The sulfur atoms are provided by the cysteine/cysteine desulfurase (IscS) system. The protein is tRNA-cytidine(32) 2-sulfurtransferase of Shewanella baltica (strain OS155 / ATCC BAA-1091).